A 99-amino-acid chain; its full sequence is uncharacterized protein (99 aa).

This is an uncharacterized protein from Acidianus hospitalis (AFV-1).